We begin with the raw amino-acid sequence, 320 residues long: Polycomb complex protein BMI-1-A (320 aa).

The RING-type zinc finger occupies 18–57; it reads CVLCGGYFIDATTIIECLHSFCKMCIVRYLETSKYCPICD. The short motif at 81-95 is the Nuclear localization signal element; sequence KLVPGLFKNEMKRRR. The interval 234 to 320 is disordered; sequence ITHPQEGLNN…ALNGSSTSSG (87 aa). The span at 262 to 281 shows a compositional bias: low complexity; sequence VPSTSSPLPSPSTLVQPSQP. Over residues 285–304 the composition is skewed to polar residues; sequence HISSPINGTTMTSPNRQFNF.

As to quaternary structure, component of a PRC1-like complex. Homodimer. Interacts with cbx2.

Its subcellular location is the nucleus. Functionally, component of a Polycomb group (PcG) multiprotein PRC1-like complex, a complex class required to maintain the transcriptionally repressive state of many genes, including Hox genes, throughout development. PcG PRC1 complex acts via chromatin remodeling and modification of histones; it mediates monoubiquitination of histone H2A 'Lys-119', rendering chromatin heritably changed in its expressibility. In the PRC1 complex, it is required to stimulate the E3 ubiquitin-protein ligase activity of rnf2. This Danio rerio (Zebrafish) protein is Polycomb complex protein BMI-1-A (bmi1a).